The chain runs to 461 residues: L-seryl-tRNA(Sec) selenium transferase (461 aa).

At K294 the chain carries N6-(pyridoxal phosphate)lysine.

This sequence belongs to the SelA family. The cofactor is pyridoxal 5'-phosphate.

It is found in the cytoplasm. It catalyses the reaction L-seryl-tRNA(Sec) + selenophosphate + H(+) = L-selenocysteinyl-tRNA(Sec) + phosphate. It participates in aminoacyl-tRNA biosynthesis; selenocysteinyl-tRNA(Sec) biosynthesis; selenocysteinyl-tRNA(Sec) from L-seryl-tRNA(Sec) (bacterial route): step 1/1. Its function is as follows. Converts seryl-tRNA(Sec) to selenocysteinyl-tRNA(Sec) required for selenoprotein biosynthesis. The protein is L-seryl-tRNA(Sec) selenium transferase of Actinobacillus pleuropneumoniae serotype 7 (strain AP76).